The following is a 455-amino-acid chain: Golgi pH regulator A (455 aa).

The next 5 helical transmembrane spans lie at 5–25 (IDSS…WLFF), 46–66 (VTFA…LGVL), 79–99 (LCVI…YFIV), 114–134 (CLLW…FPIL), and 150–170 (VGVI…VNCP). 2 N-linked (GlcNAc...) asparagine glycosylation sites follow: Asn-180 and Asn-243. A run of 4 helical transmembrane segments spans residues 290–310 (GYFF…NIVF), 343–363 (ISFI…LITL), 378–398 (VIVL…VLLI), and 425–445 (WFDV…YLAH).

This sequence belongs to the Golgi pH regulator (TC 1.A.38) family. Homotrimer. Interacts with RABL3; the interaction stabilizes GPR89A. Ubiquitous.

Its subcellular location is the golgi apparatus membrane. The enzyme catalyses iodide(out) = iodide(in). It catalyses the reaction chloride(in) = chloride(out). It carries out the reaction bromide(in) = bromide(out). The catalysed reaction is fluoride(in) = fluoride(out). Functionally, voltage-gated channel that enables the transfer of monoatomic anions such as iodide, chloride, bromide and fluoride which may function in counter-ion conductance and participates in Golgi acidification. Plays a role in lymphocyte development, probably by acting as a RABL3 effector in hematopoietic cells. The polypeptide is Golgi pH regulator A (Homo sapiens (Human)).